A 1371-amino-acid chain; its full sequence is DNA-directed RNA polymerase subunit beta (1371 aa).

It belongs to the RNA polymerase beta chain family. The RNAP catalytic core consists of 2 alpha, 1 beta, 1 beta' and 1 omega subunit. When a sigma factor is associated with the core the holoenzyme is formed, which can initiate transcription.

The enzyme catalyses RNA(n) + a ribonucleoside 5'-triphosphate = RNA(n+1) + diphosphate. DNA-dependent RNA polymerase catalyzes the transcription of DNA into RNA using the four ribonucleoside triphosphates as substrates. The sequence is that of DNA-directed RNA polymerase subunit beta from Geobacter sp. (strain M21).